A 151-amino-acid chain; its full sequence is Large ribosomal subunit protein uL13 (151 aa).

The protein belongs to the universal ribosomal protein uL13 family. In terms of assembly, part of the 50S ribosomal subunit.

This protein is one of the early assembly proteins of the 50S ribosomal subunit, although it is not seen to bind rRNA by itself. It is important during the early stages of 50S assembly. The chain is Large ribosomal subunit protein uL13 from Rippkaea orientalis (strain PCC 8801 / RF-1) (Cyanothece sp. (strain PCC 8801)).